We begin with the raw amino-acid sequence, 239 residues long: Ribonuclease 3 (239 aa).

In terms of domain architecture, RNase III spans 12–137; that stretch reads REKVEAVIGY…LIAAIYLDAG (126 aa). E50 is a binding site for Mg(2+). D54 is a catalytic residue. 2 residues coordinate Mg(2+): D123 and E126. E126 is an active-site residue. Residues 162-231 form the DRBM domain; that stretch reads DAKTELQEWA…ATRLLEREGV (70 aa).

It belongs to the ribonuclease III family. As to quaternary structure, homodimer. Mg(2+) is required as a cofactor.

It localises to the cytoplasm. The enzyme catalyses Endonucleolytic cleavage to 5'-phosphomonoester.. Its function is as follows. Digests double-stranded RNA. Involved in the processing of primary rRNA transcript to yield the immediate precursors to the large and small rRNAs (23S and 16S). Processes some mRNAs, and tRNAs when they are encoded in the rRNA operon. Processes pre-crRNA and tracrRNA of type II CRISPR loci if present in the organism. This Allorhizobium ampelinum (strain ATCC BAA-846 / DSM 112012 / S4) (Agrobacterium vitis (strain S4)) protein is Ribonuclease 3.